The chain runs to 375 residues: Putative disease resistance protein At3g15700 (375 aa).

Residues 17–49 (KENDNVKKLKTATEELKDLRNIVMKRVKMYEDQ) are a coiled coil. The 215-residue stretch at 158–372 (DNTGIIGLYG…LSTSPPNFSG (215 aa)) folds into the NB-ARC domain. Residue 167 to 174 (GVEGVGKT) participates in ATP binding.

In terms of biological role, potential disease resistance protein. The sequence is that of Putative disease resistance protein At3g15700 from Arabidopsis thaliana (Mouse-ear cress).